A 100-amino-acid polypeptide reads, in one-letter code: Urease subunit gamma (100 aa).

This sequence belongs to the urease gamma subunit family. As to quaternary structure, heterotrimer of UreA (gamma), UreB (beta) and UreC (alpha) subunits. Three heterotrimers associate to form the active enzyme.

The protein resides in the cytoplasm. The enzyme catalyses urea + 2 H2O + H(+) = hydrogencarbonate + 2 NH4(+). Its pathway is nitrogen metabolism; urea degradation; CO(2) and NH(3) from urea (urease route): step 1/1. This Parasynechococcus marenigrum (strain WH8102) protein is Urease subunit gamma.